A 310-amino-acid chain; its full sequence is Protoheme IX farnesyltransferase 2 (310 aa).

9 consecutive transmembrane segments (helical) span residues 25–45 (PGII…AAKG), 49–69 (LVLM…GCAI), 87–107 (RVTV…LALG), 120–139 (ALAL…VYSL), 145–165 (SVYG…VGYC), 176–196 (AILL…IAIF), 220–240 (LHIV…PLAG), 242–262 (TGIA…AMAL), and 277–297 (QVFG…ALDF).

This sequence belongs to the UbiA prenyltransferase family. Protoheme IX farnesyltransferase subfamily.

Its subcellular location is the cell inner membrane. The catalysed reaction is heme b + (2E,6E)-farnesyl diphosphate + H2O = Fe(II)-heme o + diphosphate. The protein operates within porphyrin-containing compound metabolism; heme O biosynthesis; heme O from protoheme: step 1/1. Functionally, converts heme B (protoheme IX) to heme O by substitution of the vinyl group on carbon 2 of heme B porphyrin ring with a hydroxyethyl farnesyl side group. This Shewanella baltica (strain OS185) protein is Protoheme IX farnesyltransferase 2.